The following is a 199-amino-acid chain: LIM domain-containing protein WLIM2b (199 aa).

LIM zinc-binding domains follow at residues 8–68 and 106–166; these read QKCK…LFKE and EKCA…LFKE.

Interacts with F-actin. As to expression, expressed in roots, leaves, stems, flowers and siliques. Barely detected in pollen.

It is found in the cytoplasm. Its subcellular location is the cytoskeleton. In terms of biological role, binds to actin filaments and promotes cross-linking into thick bundles. Has an actin-stabilizing activity. The actin regulatory activities are not regulated by pH and [Ca(2+)]. The polypeptide is LIM domain-containing protein WLIM2b (Arabidopsis thaliana (Mouse-ear cress)).